The following is a 276-amino-acid chain: Adenylate kinase (276 aa).

38 to 43 (GSGKGT) serves as a coordination point for ATP. The interval 58–87 (STGDMLRAAIEQGTETGKQAKTIMDQGGLV) is NMP. AMP is bound by residues Thr59, Arg64, 85 to 87 (GLV), 113 to 116 (GFPR), and Gln120. Positions 154 to 191 (GRLVHPSSGRSYHREFFPPKVDMIDDITGEPLIQRSDD) are LID. Residues Arg155 and 164–165 (SY) contribute to the ATP site. AMP-binding residues include Arg188 and Arg199. An ATP-binding site is contributed by Lys227.

Belongs to the adenylate kinase family. AK2 subfamily. Monomer.

The protein resides in the cytoplasm. It localises to the cytosol. Its subcellular location is the mitochondrion intermembrane space. The enzyme catalyses AMP + ATP = 2 ADP. In terms of biological role, catalyzes the reversible transfer of the terminal phosphate group between ATP and AMP. Plays an important role in cellular energy homeostasis and in adenine nucleotide metabolism. Adenylate kinase activity is critical for regulation of the phosphate utilization and the AMP de novo biosynthesis pathways. This is Adenylate kinase (adkA) from Dictyostelium discoideum (Social amoeba).